The following is a 238-amino-acid chain: MIINAKGPASFAEKYIVRSIWDNKFPPGSILPAERELSELIGVTRTTLREVLQRLARDGWLKIQHGKPTRVNNFWETSGLNILETIADLNPEGFPVLVDQLLSARTNVSAIYFRGALRYNPDTAVDVLAKIHQLEDTAESYAEFDYLLHHTLAFSSGNPLYVLILNGFKGLYSRVGRYYFTSSDARLLALNFYKELELLAQVKNYLDVPALMRTYGMNSGKMWLQLRDDMPASIAQDN.

Residues 6-74 (KGPASFAEKY…HGKPTRVNNF (69 aa)) enclose the HTH gntR-type domain. Residues 34–53 (ERELSELIGVTRTTLREVLQ) constitute a DNA-binding region (H-T-H motif).

Homodimer.

The protein resides in the cytoplasm. Multifunctional regulator of fatty acid metabolism. This Shewanella baltica (strain OS223) protein is Fatty acid metabolism regulator protein.